The sequence spans 315 residues: O-antigen chain rhamnosyltransferase WbaN (315 aa).

The protein belongs to the glycosyltransferase 2 family.

It carries out the reaction alpha-D-galactosyl-di-trans,octa-cis-undecaprenyl diphosphate + dTDP-beta-L-rhamnose = alpha-L-rhamnosyl-(1-&gt;3)-alpha-D-galactosyl-1-diphospho-di-trans,octa-cis-undecaprenol + dTDP + H(+). It participates in bacterial outer membrane biogenesis; LPS O-antigen biosynthesis. Functionally, rhamnosyltransferase involved in the biosynthesis of the repeat unit of the lipopolysaccharide (LPS) O-antigen region. Catalyzes the addition of a rhamnose to the galactosyl-undecaprenyl diphosphate intermediate. The sequence is that of O-antigen chain rhamnosyltransferase WbaN from Salmonella anatum.